We begin with the raw amino-acid sequence, 585 residues long: Proline--tRNA ligase (585 aa).

The protein belongs to the class-II aminoacyl-tRNA synthetase family. ProS type 1 subfamily. As to quaternary structure, homodimer.

The protein localises to the cytoplasm. The enzyme catalyses tRNA(Pro) + L-proline + ATP = L-prolyl-tRNA(Pro) + AMP + diphosphate. Its function is as follows. Catalyzes the attachment of proline to tRNA(Pro) in a two-step reaction: proline is first activated by ATP to form Pro-AMP and then transferred to the acceptor end of tRNA(Pro). As ProRS can inadvertently accommodate and process non-cognate amino acids such as alanine and cysteine, to avoid such errors it has two additional distinct editing activities against alanine. One activity is designated as 'pretransfer' editing and involves the tRNA(Pro)-independent hydrolysis of activated Ala-AMP. The other activity is designated 'posttransfer' editing and involves deacylation of mischarged Ala-tRNA(Pro). The misacylated Cys-tRNA(Pro) is not edited by ProRS. This Corynebacterium diphtheriae (strain ATCC 700971 / NCTC 13129 / Biotype gravis) protein is Proline--tRNA ligase.